The sequence spans 322 residues: Aspartate carbamoyltransferase catalytic subunit (322 aa).

2 residues coordinate carbamoyl phosphate: R65 and T66. K93 serves as a coordination point for L-aspartate. Carbamoyl phosphate is bound by residues R115, H143, and Q146. L-aspartate-binding residues include R176 and R230. G271 and P272 together coordinate carbamoyl phosphate.

The protein belongs to the aspartate/ornithine carbamoyltransferase superfamily. ATCase family. Heterododecamer (2C3:3R2) of six catalytic PyrB chains organized as two trimers (C3), and six regulatory PyrI chains organized as three dimers (R2).

The enzyme catalyses carbamoyl phosphate + L-aspartate = N-carbamoyl-L-aspartate + phosphate + H(+). It participates in pyrimidine metabolism; UMP biosynthesis via de novo pathway; (S)-dihydroorotate from bicarbonate: step 2/3. In terms of biological role, catalyzes the condensation of carbamoyl phosphate and aspartate to form carbamoyl aspartate and inorganic phosphate, the committed step in the de novo pyrimidine nucleotide biosynthesis pathway. The sequence is that of Aspartate carbamoyltransferase catalytic subunit from Brucella anthropi (strain ATCC 49188 / DSM 6882 / CCUG 24695 / JCM 21032 / LMG 3331 / NBRC 15819 / NCTC 12168 / Alc 37) (Ochrobactrum anthropi).